The sequence spans 210 residues: Ribosomal RNA large subunit methyltransferase E (210 aa).

The S-adenosyl-L-methionine site is built by glycine 67, tryptophan 69, aspartate 87, aspartate 103, and aspartate 128. The active-site Proton acceptor is the lysine 168.

It belongs to the class I-like SAM-binding methyltransferase superfamily. RNA methyltransferase RlmE family.

It localises to the cytoplasm. It carries out the reaction uridine(2552) in 23S rRNA + S-adenosyl-L-methionine = 2'-O-methyluridine(2552) in 23S rRNA + S-adenosyl-L-homocysteine + H(+). Its function is as follows. Specifically methylates the uridine in position 2552 of 23S rRNA at the 2'-O position of the ribose in the fully assembled 50S ribosomal subunit. This Psychrobacter cryohalolentis (strain ATCC BAA-1226 / DSM 17306 / VKM B-2378 / K5) protein is Ribosomal RNA large subunit methyltransferase E.